The chain runs to 279 residues: 4-diphosphocytidyl-2-C-methyl-D-erythritol kinase (279 aa).

Residue Lys-10 is part of the active site. ATP is bound at residue 91–101; that stretch reads PVASGIGGGSA. Asp-130 is an active-site residue.

It belongs to the GHMP kinase family. IspE subfamily.

The catalysed reaction is 4-CDP-2-C-methyl-D-erythritol + ATP = 4-CDP-2-C-methyl-D-erythritol 2-phosphate + ADP + H(+). Its pathway is isoprenoid biosynthesis; isopentenyl diphosphate biosynthesis via DXP pathway; isopentenyl diphosphate from 1-deoxy-D-xylulose 5-phosphate: step 3/6. In terms of biological role, catalyzes the phosphorylation of the position 2 hydroxy group of 4-diphosphocytidyl-2C-methyl-D-erythritol. The polypeptide is 4-diphosphocytidyl-2-C-methyl-D-erythritol kinase (Ruegeria pomeroyi (strain ATCC 700808 / DSM 15171 / DSS-3) (Silicibacter pomeroyi)).